Consider the following 450-residue polypeptide: MASVAVEPQLSVVTRVANLPLVSSTYDLVSSAYISRKDQYPYLKSLCEMAEKGMKTITSVAVTSALPIIQKLEPQIAVANTYACKGLDRIEEKLPILNQPTNQVVANAKGAMTGAKDAVTTTVTGAKDSVASTITGVVDRTKGAVTGSVEKTKSVVSGSINTVLRSRVMQLMSSGVENALTKSELLVDQYLPLTKDELEKEAKKVEGFDMVQKPSYYVRLGSLSTKLRSRAYQQALCRVEEAKRKGQETISQLHSAFNLSELARKNVHNANQKIQDAQDKLYLSWLEWKRSIGYDDTDESHCAEHIESRTLAIARNLTQQLQTMCHTLLSNIQGLPQNIQDRANHLGVMAGDIYSVFRNAASFKEVSDGLLASSKGQLQKMKESLDDVMDYLVNNTPLNWLVGPFYPQVTESESAQAPGTTRRPGRWSRKHPKPVPVSNAEGSQPDDSSS.

A2 is modified (N-acetylalanine). S215 bears the Phosphoserine mark. A Phosphotyrosine modification is found at Y232. The interval 411 to 450 (ESESAQAPGTTRRPGRWSRKHPKPVPVSNAEGSQPDDSSS) is disordered. Basic residues predominate over residues 423–433 (RPGRWSRKHPK). Residues 440–450 (AEGSQPDDSSS) show a composition bias toward polar residues.

This sequence belongs to the perilipin family. Interacts with IRGC. Post-translationally, acylated; primarily with C14, C16 and C18 fatty acids. In terms of processing, phosphorylation at Tyr-232 by isoform 1 of CHKA (CHKalpha2) promotes dissociation from lipid droplets: dissociation is followed by recruitment of autophagosome machinery to lipid droplets and subsequent lipid droplet lipolysis. Polyubiquitination of Nt-acetylatable A-PLIN2 by MARCHF6 lead to degradation by 26S proteasomes. In terms of tissue distribution, milk lipid globules.

It localises to the membrane. The protein resides in the lipid droplet. Its function is as follows. Structural component of lipid droplets, which is required for the formation and maintenance of lipid storage droplets. This Bos taurus (Bovine) protein is Perilipin-2 (PLIN2).